The sequence spans 127 residues: uncharacterized protein (127 aa).

In terms of domain architecture, VOC spans methionine 1 to lysine 127.

Belongs to the glyoxalase I family.

This is an uncharacterized protein from Bacillus subtilis (strain 168).